The sequence spans 359 residues: UPF0284 protein MTH_1426 (359 aa).

The protein belongs to the UPF0284 family.

This chain is UPF0284 protein MTH_1426, found in Methanothermobacter thermautotrophicus (strain ATCC 29096 / DSM 1053 / JCM 10044 / NBRC 100330 / Delta H) (Methanobacterium thermoautotrophicum).